Consider the following 248-residue polypeptide: MAFSAKTSGSDDLKAIISAISTLVEEATFVATAEGITFRGMDPSHVALIDISWPNSAFEKYECDSNIKFGVRIDEFTKLIKRADKKDSITISVSKDSMLLIDIGSNKKYKIRLIESSATDTPLPKISYDAKIELATTSFEKILGDVQVVSDYLTIKAKPTGVEFAGKGDSGEAAIDVKKDDDSMEALKVKKESEGTYSLEYLNPIVRAVGGAAGSVTCEFSDAKPLRVEFKVANIGRIHFYLAPRVSS.

Belongs to the PCNA family. Homotrimer. The subunits circularize to form a toroid; DNA passes through its center. Replication factor C (RFC) is required to load the toroid on the DNA.

In terms of biological role, sliding clamp subunit that acts as a moving platform for DNA processing. Responsible for tethering the catalytic subunit of DNA polymerase and other proteins to DNA during high-speed replication. This is DNA polymerase sliding clamp from Cenarchaeum symbiosum (strain A).